Here is a 360-residue protein sequence, read N- to C-terminus: 3-isopropylmalate dehydrogenase (360 aa).

Residue 76-89 (GPKWDKIERDIRPE) coordinates NAD(+). Residues Arg96, Arg106, Arg134, and Asp224 each contribute to the substrate site. 3 residues coordinate Mg(2+): Asp224, Asp248, and Asp252. Residue 282–294 (GSAPDIAGLGIAN) coordinates NAD(+).

Belongs to the isocitrate and isopropylmalate dehydrogenases family. LeuB type 1 subfamily. As to quaternary structure, homodimer. Requires Mg(2+) as cofactor. Mn(2+) is required as a cofactor.

Its subcellular location is the cytoplasm. It catalyses the reaction (2R,3S)-3-isopropylmalate + NAD(+) = 4-methyl-2-oxopentanoate + CO2 + NADH. It functions in the pathway amino-acid biosynthesis; L-leucine biosynthesis; L-leucine from 3-methyl-2-oxobutanoate: step 3/4. Catalyzes the oxidation of 3-carboxy-2-hydroxy-4-methylpentanoate (3-isopropylmalate) to 3-carboxy-4-methyl-2-oxopentanoate. The product decarboxylates to 4-methyl-2 oxopentanoate. The protein is 3-isopropylmalate dehydrogenase of Pseudomonas putida (strain ATCC 47054 / DSM 6125 / CFBP 8728 / NCIMB 11950 / KT2440).